The following is a 658-amino-acid chain: Threonine--tRNA ligase (658 aa).

The TGS domain maps to Met1–Thr64. Positions Asp246–Pro549 are catalytic. The Zn(2+) site is built by Cys343, His394, and His526.

It belongs to the class-II aminoacyl-tRNA synthetase family. As to quaternary structure, homodimer. It depends on Zn(2+) as a cofactor.

The protein localises to the cytoplasm. The enzyme catalyses tRNA(Thr) + L-threonine + ATP = L-threonyl-tRNA(Thr) + AMP + diphosphate + H(+). Catalyzes the attachment of threonine to tRNA(Thr) in a two-step reaction: L-threonine is first activated by ATP to form Thr-AMP and then transferred to the acceptor end of tRNA(Thr). Also edits incorrectly charged L-seryl-tRNA(Thr). The protein is Threonine--tRNA ligase of Mesorhizobium japonicum (strain LMG 29417 / CECT 9101 / MAFF 303099) (Mesorhizobium loti (strain MAFF 303099)).